The primary structure comprises 88 residues: MGKLVGAPKGHDRYRDPKTHQITPALYRVRAPFFWRNTIALFAVSSIPLAVYLYTFKKMGDDDLGDIPIPPISDEELQKLKLEYENQK.

The Mitochondrial matrix portion of the chain corresponds to 1–32 (MGKLVGAPKGHDRYRDPKTHQITPALYRVRAP). A helical transmembrane segment spans residues 33–55 (FFWRNTIALFAVSSIPLAVYLYT). Residues 56–88 (FKKMGDDDLGDIPIPPISDEELQKLKLEYENQK) lie on the Mitochondrial intermembrane side of the membrane.

It belongs to the COA3 family. As to quaternary structure, component of 250-400 kDa complexes called cytochrome oxidase assembly intermediates or COA complexes.

The protein resides in the mitochondrion inner membrane. Its function is as follows. Required for assembly of cytochrome c oxidase (complex IV). The sequence is that of Cytochrome c oxidase assembly factor 3, mitochondrial (COA3) from Candida albicans (strain WO-1) (Yeast).